A 793-amino-acid polypeptide reads, in one-letter code: Kinesin-associated protein 3 (793 aa).

Serine 60 carries the post-translational modification Phosphoserine. The segment covering 103–119 has biased composition (basic and acidic residues); the sequence is LPGKEKKEKSSKPKDPP. A disordered region spans residues 103 to 123; sequence LPGKEKKEKSSKPKDPPPFEG. ARM repeat units follow at residues 333 to 373, 374 to 412, 494 to 533, 578 to 620, and 621 to 662; these read FMEN…NLSF, DTGL…HISM, DGPT…NLTI, DDSC…QMVF, and HQAT…IIAE.

As to quaternary structure, interacts with SMC3 subunit of the cohesin complex. Heterotrimer of KIFAP3, KIF3A and KIF3B. Interacts with RAP1GDS1/SMG GDS. In terms of processing, phosphorylated on tyrosine residues by SRC in vitro; this reduces the binding affinity of the protein for RAP1GDS1.

In terms of biological role, involved in tethering the chromosomes to the spindle pole and in chromosome movement. Binds to the tail domain of the KIF3A/KIF3B heterodimer to form a heterotrimeric KIF3 complex and may regulate the membrane binding of this complex. This chain is Kinesin-associated protein 3 (Kifap3), found in Mus musculus (Mouse).